The following is a 196-amino-acid chain: Imidazoleglycerol-phosphate dehydratase (196 aa).

This sequence belongs to the imidazoleglycerol-phosphate dehydratase family.

The protein localises to the cytoplasm. The enzyme catalyses D-erythro-1-(imidazol-4-yl)glycerol 3-phosphate = 3-(imidazol-4-yl)-2-oxopropyl phosphate + H2O. The protein operates within amino-acid biosynthesis; L-histidine biosynthesis; L-histidine from 5-phospho-alpha-D-ribose 1-diphosphate: step 6/9. The protein is Imidazoleglycerol-phosphate dehydratase of Oleidesulfovibrio alaskensis (strain ATCC BAA-1058 / DSM 17464 / G20) (Desulfovibrio alaskensis).